We begin with the raw amino-acid sequence, 319 residues long: Ornithine carbamoyltransferase (319 aa).

Carbamoyl phosphate-binding positions include 63-66 (STRT), Gln90, Arg114, and 141-144 (HPCQ). L-ornithine contacts are provided by residues Asn172, Asp236, and 240 to 241 (SM). Residues 276-277 (CL) and Arg304 contribute to the carbamoyl phosphate site.

It belongs to the aspartate/ornithine carbamoyltransferase superfamily. OTCase family.

Its subcellular location is the cytoplasm. It catalyses the reaction carbamoyl phosphate + L-ornithine = L-citrulline + phosphate + H(+). It participates in amino-acid biosynthesis; L-arginine biosynthesis; L-arginine from L-ornithine and carbamoyl phosphate: step 1/3. In terms of biological role, reversibly catalyzes the transfer of the carbamoyl group from carbamoyl phosphate (CP) to the N(epsilon) atom of ornithine (ORN) to produce L-citrulline. In Halalkalibacterium halodurans (strain ATCC BAA-125 / DSM 18197 / FERM 7344 / JCM 9153 / C-125) (Bacillus halodurans), this protein is Ornithine carbamoyltransferase.